The chain runs to 692 residues: Methionine--tRNA ligase (692 aa).

The 'HIGH' region signature appears at 12-22 (PYANGSFHIGH). Residues cysteine 143, cysteine 146, cysteine 156, and cysteine 159 each contribute to the Zn(2+) site. Residues 341 to 345 (KMSKS) carry the 'KMSKS' region motif. Lysine 344 provides a ligand contact to ATP. The 107-residue stretch at 586 to 692 (DFAKIDLRIA…PGAQPGMRVR (107 aa)) folds into the tRNA-binding domain.

Belongs to the class-I aminoacyl-tRNA synthetase family. MetG type 1 subfamily. As to quaternary structure, homodimer. Zn(2+) is required as a cofactor.

The protein localises to the cytoplasm. The enzyme catalyses tRNA(Met) + L-methionine + ATP = L-methionyl-tRNA(Met) + AMP + diphosphate. Is required not only for elongation of protein synthesis but also for the initiation of all mRNA translation through initiator tRNA(fMet) aminoacylation. The sequence is that of Methionine--tRNA ligase from Bordetella parapertussis (strain 12822 / ATCC BAA-587 / NCTC 13253).